A 425-amino-acid chain; its full sequence is Serine--tRNA ligase (425 aa).

An L-serine-binding site is contributed by 233–235 (TAE). An ATP-binding site is contributed by 264–266 (RAE). Glu-287 is an L-serine binding site. Residue 351 to 354 (EISS) coordinates ATP. Ser-387 is an L-serine binding site.

It belongs to the class-II aminoacyl-tRNA synthetase family. Type-1 seryl-tRNA synthetase subfamily. As to quaternary structure, homodimer. The tRNA molecule binds across the dimer.

The protein localises to the cytoplasm. The catalysed reaction is tRNA(Ser) + L-serine + ATP = L-seryl-tRNA(Ser) + AMP + diphosphate + H(+). It carries out the reaction tRNA(Sec) + L-serine + ATP = L-seryl-tRNA(Sec) + AMP + diphosphate + H(+). Its pathway is aminoacyl-tRNA biosynthesis; selenocysteinyl-tRNA(Sec) biosynthesis; L-seryl-tRNA(Sec) from L-serine and tRNA(Sec): step 1/1. Its function is as follows. Catalyzes the attachment of serine to tRNA(Ser). Is also able to aminoacylate tRNA(Sec) with serine, to form the misacylated tRNA L-seryl-tRNA(Sec), which will be further converted into selenocysteinyl-tRNA(Sec). The polypeptide is Serine--tRNA ligase (Clostridium perfringens (strain SM101 / Type A)).